The primary structure comprises 642 residues: Threonine--tRNA ligase (642 aa).

Residues 1–61 form the TGS domain; that stretch reads MPVITLPDGS…ESDAQLAIIT (61 aa). The segment at 243-534 is catalytic; that stretch reads DHRKIGKQLD…LTEEYAGFFP (292 aa). The Zn(2+) site is built by cysteine 334, histidine 385, and histidine 511.

The protein belongs to the class-II aminoacyl-tRNA synthetase family. As to quaternary structure, homodimer. Requires Zn(2+) as cofactor.

The protein resides in the cytoplasm. It carries out the reaction tRNA(Thr) + L-threonine + ATP = L-threonyl-tRNA(Thr) + AMP + diphosphate + H(+). Its function is as follows. Catalyzes the attachment of threonine to tRNA(Thr) in a two-step reaction: L-threonine is first activated by ATP to form Thr-AMP and then transferred to the acceptor end of tRNA(Thr). Also edits incorrectly charged L-seryl-tRNA(Thr). This chain is Threonine--tRNA ligase, found in Yersinia enterocolitica serotype O:8 / biotype 1B (strain NCTC 13174 / 8081).